Reading from the N-terminus, the 332-residue chain is GTPase Obg (332 aa).

An Obg domain is found at 1–159 (MKFLDQAKIY…RWVWLRLKLI (159 aa)). Positions 160–328 (ADAGLVGLPN…VLRETLRMIR (169 aa)) constitute an OBG-type G domain. Residues 166–173 (GLPNAGKS), 191–195 (FTTLH), 213–216 (DIPG), 280–283 (NKMD), and 309–311 (SAA) contribute to the GTP site. Residues S173 and T193 each coordinate Mg(2+).

The protein belongs to the TRAFAC class OBG-HflX-like GTPase superfamily. OBG GTPase family. As to quaternary structure, monomer. Requires Mg(2+) as cofactor.

The protein resides in the cytoplasm. An essential GTPase which binds GTP, GDP and possibly (p)ppGpp with moderate affinity, with high nucleotide exchange rates and a fairly low GTP hydrolysis rate. Plays a role in control of the cell cycle, stress response, ribosome biogenesis and in those bacteria that undergo differentiation, in morphogenesis control. This Acidiphilium cryptum (strain JF-5) protein is GTPase Obg.